A 97-amino-acid polypeptide reads, in one-letter code: Co-chaperonin GroES (97 aa).

This sequence belongs to the GroES chaperonin family. As to quaternary structure, heptamer of 7 subunits arranged in a ring. Interacts with the chaperonin GroEL.

It localises to the cytoplasm. Its function is as follows. Together with the chaperonin GroEL, plays an essential role in assisting protein folding. The GroEL-GroES system forms a nano-cage that allows encapsulation of the non-native substrate proteins and provides a physical environment optimized to promote and accelerate protein folding. GroES binds to the apical surface of the GroEL ring, thereby capping the opening of the GroEL channel. This Pseudomonas putida (Arthrobacter siderocapsulatus) protein is Co-chaperonin GroES.